Consider the following 259-residue polypeptide: Small ribosomal subunit protein uS2 (259 aa).

Belongs to the universal ribosomal protein uS2 family.

The protein is Small ribosomal subunit protein uS2 of Streptococcus pneumoniae serotype 2 (strain D39 / NCTC 7466).